Reading from the N-terminus, the 593-residue chain is UvrABC system protein C (593 aa).

A GIY-YIG domain is found at 17-94 (MEPGCYLMKD…IKQYQPRYNI (78 aa)). A UVR domain is found at 199–234 (KTILKSLEERMLTASESLDFERAKEYRDLIQHIQNL).

The protein belongs to the UvrC family. In terms of assembly, interacts with UvrB in an incision complex.

Its subcellular location is the cytoplasm. Functionally, the UvrABC repair system catalyzes the recognition and processing of DNA lesions. UvrC both incises the 5' and 3' sides of the lesion. The N-terminal half is responsible for the 3' incision and the C-terminal half is responsible for the 5' incision. In Staphylococcus aureus (strain MSSA476), this protein is UvrABC system protein C.